The primary structure comprises 361 residues: Feruloyl CoA ortho-hydroxylase 2 (361 aa).

The Fe2OG dioxygenase domain maps to 211 to 312 (GSTRINLNYY…RISVPIFVSP (102 aa)). A 2-oxoglutarate-binding site is contributed by tyrosine 220. Residues histidine 235, aspartate 237, and histidine 293 each contribute to the Fe cation site. Positions 303 and 305 each coordinate 2-oxoglutarate.

It belongs to the iron/ascorbate-dependent oxidoreductase family. Requires L-ascorbate as cofactor. The cofactor is Fe(2+). As to expression, low expression in roots.

The catalysed reaction is (E)-feruloyl-CoA + 2-oxoglutarate + O2 = (E)-6-hydroxyferuloyl-CoA + succinate + CO2. It catalyses the reaction (E)-6-hydroxyferuloyl-CoA = scopoletin + CoA. 2-oxoglutarate (OG)- and Fe(II)-dependent dioxygenase (2OGD)involved in scopoletin biosynthesis. Converts feruloyl CoA into 6'-hydroxyferuloyl CoA but has no activity with ferulic acid, feruloylquinic acid, caffeic acid, caffeoyl CoA, p-coumaric acid, cinnamic acid, cinnamoyl CoA or benzoyl CoA. The polypeptide is Feruloyl CoA ortho-hydroxylase 2 (Arabidopsis thaliana (Mouse-ear cress)).